A 90-amino-acid polypeptide reads, in one-letter code: U7-theraphotoxin-Hhn1l (90 aa).

Residues methionine 1–serine 19 form the signal peptide. Positions phenylalanine 20–glutamate 50 are excised as a propeptide. Cystine bridges form between cysteine 51-cysteine 65, cysteine 58-cysteine 70, and cysteine 64-cysteine 81.

It belongs to the neurotoxin 10 (Hwtx-1) family. 13 (Hntx-13) subfamily. Expressed by the venom gland.

The protein localises to the secreted. Functionally, ion channel inhibitor. The polypeptide is U7-theraphotoxin-Hhn1l (Cyriopagopus hainanus (Chinese bird spider)).